The sequence spans 194 residues: Imidazoleglycerol-phosphate dehydratase (194 aa).

Belongs to the imidazoleglycerol-phosphate dehydratase family.

It localises to the cytoplasm. The enzyme catalyses D-erythro-1-(imidazol-4-yl)glycerol 3-phosphate = 3-(imidazol-4-yl)-2-oxopropyl phosphate + H2O. Its pathway is amino-acid biosynthesis; L-histidine biosynthesis; L-histidine from 5-phospho-alpha-D-ribose 1-diphosphate: step 6/9. This chain is Imidazoleglycerol-phosphate dehydratase, found in Caldicellulosiruptor bescii (strain ATCC BAA-1888 / DSM 6725 / KCTC 15123 / Z-1320) (Anaerocellum thermophilum).